A 782-amino-acid polypeptide reads, in one-letter code: Spastin (782 aa).

Residues 1–103 (MVRTKNQSSS…GNAPRGGNSS (103 aa)) are disordered. Topologically, residues 1–115 (MVRTKNQSSS…KQNLYVVSFP (115 aa)) are cytoplasmic. The tract at residues 1–212 (MVRTKNQSSS…RAIQPLEMAG (212 aa)) is required for localization to punctate cytoplasmic foci. Low complexity predominate over residues 8–19 (SSSSSASSSTKS). Positions 25–34 (GGTTNRSRSC) are enriched in polar residues. 2 stretches are compositionally biased toward low complexity: residues 44–75 (SKSSSKPTSNNRQRTTTNNNTTAITTTPGSSP) and 84–93 (TTDADLTPTS). Positions 116–136 (IIFLFNVLRSLIYQLFCIFRY) form an intramembrane region, helical. Residues 137–782 (LYGASTKVIY…WSQDYGDITI (646 aa)) are Cytoplasmic-facing. The segment at 210–782 (MAGNRAGGNY…WSQDYGDITI (573 aa)) is sufficient for interaction with microtubules and microtubule severing. In terms of domain architecture, MIT spans 235 to 310 (HRRAFEYISK…SMARDRLHFL (76 aa)). The segment at 325–479 (KEQQQKKKSP…GSGSGASTPM (155 aa)) is disordered. Residues 334–343 (PQQQPQQQQQ) show a composition bias toward low complexity. Polar residues-rich tracts occupy residues 408 to 426 (NKSQTLPRNLGSKTSSTSV) and 447 to 463 (QFSSGRNTPPQRSRTPI). A required for interaction with microtubules region spans residues 465 to 479 (NNAAGGSGSGASTPM). 547–554 (GPPGNGKT) is an ATP binding site.

It belongs to the AAA ATPase family. Spastin subfamily. Homohexamer. The homohexamer is stabilized by ATP-binding. The homohexamer may adopt a ring conformation through which microtubules pass prior to being severed. Interacts with microtubules. Interacts with atl; may be involved in microtubule dynamics.

It localises to the membrane. The protein localises to the cytoplasm. Its subcellular location is the cytoskeleton. It is found in the microtubule organizing center. The protein resides in the centrosome. It localises to the chromosome. The protein localises to the lipid droplet. The enzyme catalyses n ATP + n H2O + a microtubule = n ADP + n phosphate + (n+1) alpha/beta tubulin heterodimers.. ATP-dependent microtubule severing protein. Stimulates microtubule minus-end depolymerization and poleward microtubule flux in the mitotic spindle. Regulates microtubule stability in the neuromuscular junction synapse. Involved in lipid metabolism by regulating the size and distribution of lipid droplets. Involved in axon regeneration by regulating microtubule severing. In Drosophila grimshawi (Hawaiian fruit fly), this protein is Spastin.